The sequence spans 512 residues: Reduced folate transporter (512 aa).

The residue at position 1 (Met-1) is an N-acetylmethionine. The Cytoplasmic portion of the chain corresponds to 1 to 29; sequence MVPTGQVAEKQAYEEPRQDHELKSWRCLV. The helical transmembrane segment at 30 to 50 threads the bilayer; sequence FYLCFFGFMAQLRPGESFITP. Folate is bound by residues Ile-48 and Thr-49. Residues 51–62 lie on the Extracellular side of the membrane; the sequence is FLLERKFTKEQV. Residues 63–85 form a helical membrane-spanning segment; it reads TNEIIPMLPYSHLAVLVPVFLLT. The Cytoplasmic segment spans residues 86–89; sequence DYLR. A helical membrane pass occupies residues 90–110; that stretch reads YKPVLVLQCLSFVCVWLLLLL. The Extracellular segment spans residues 111–114; sequence GTSV. A helical transmembrane segment spans residues 115-137; sequence VHMQLMEVFYSVTMAARIAYSSY. Folate contacts are provided by Glu-121 and Arg-131. Over 138–151 the chain is Cytoplasmic; the sequence is IFSLVHPSRYQRMA. A helical membrane pass occupies residues 152–176; sequence SYSRAAVLLGVFISSVLGQALVTVG. Val-162 serves as a coordination point for folate. The Extracellular portion of the chain corresponds to 177–181; that stretch reads HISTY. A helical membrane pass occupies residues 182 to 200; that stretch reads TLNCVSLGFILFSLVLSLF. The Cytoplasmic segment spans residues 201–266; it reads LKRPKRSLFF…ELVENARQPQ (66 aa). A helical membrane pass occupies residues 267-292; that stretch reads LRLWCLWWVFNSSGYYLITYYVHVLW. Positions 281, 282, and 286 each coordinate folate. Residues 293–300 are Extracellular-facing; the sequence is RSTDSSLS. Residues 301-323 form a helical membrane-spanning segment; that stretch reads YNGAVDAASTLLSAITSFSAGFL. Residues 324–329 lie on the Cytoplasmic side of the membrane; sequence SIRWTL. A helical transmembrane segment spans residues 330-350; it reads WSKLVIAGVIAIQASLVFCMF. Topologically, residues 351-353 are extracellular; the sequence is QIR. The helical transmembrane segment at 354–377 threads the bilayer; the sequence is DIWVCYVTFVLFRGAYQFLVPIAT. Arg-366 and Gln-370 together coordinate folate. At 378 to 391 the chain is on the cytoplasmic side; sequence FQIASSLSKELCAL. The chain crosses the membrane as a helical span at residues 392–415; sequence VFGINTFLATALKTCITLVVSDKR. A required for substrate-binding region spans residues 400–412; the sequence is ATALKTCITLVVS. The Extracellular segment spans residues 416-423; it reads GLGLQVRD. Residues 424–448 form a helical membrane-spanning segment; it reads QFRIYFIYFLMLSITCFAWAGLDGL. The Cytoplasmic portion of the chain corresponds to 449–512; that stretch reads RYCQRGRHQP…RGDLRVEAKA (64 aa). Phosphoserine is present on residues Ser-467, Ser-472, and Ser-477. Residues 478-512 form a disordered region; that stretch reads LQDGDLRGPQPSAPQLLSEDGMEDDRGDLRVEAKA.

Belongs to the reduced folate carrier (RFC) transporter (TC 2.A.48) family.

The protein resides in the cell membrane. The protein localises to the apical cell membrane. It is found in the basolateral cell membrane. It catalyses the reaction 5-amino-1-(5-phospho-beta-D-ribosyl)imidazole-4-carboxamide(in) + (6S)-5-methyl-5,6,7,8-tetrahydrofolate(out) = 5-amino-1-(5-phospho-beta-D-ribosyl)imidazole-4-carboxamide(out) + (6S)-5-methyl-5,6,7,8-tetrahydrofolate(in). Functionally, antiporter that mediates the import of reduced folates, driven by the export of organic anions. Also acts as an importer of immunoreactive cyclic dinucleotides, but with a lower transporter activity. Mechanistically, acts as a secondary active transporter, which exports intracellular organic anions down their concentration gradients to facilitate the uptake of its substrates. Has high affinity for N5-methyltetrahydrofolate, the predominant circulating form of folate. Also mediates the import of antifolate drug methotrexate. 5-amino-4-imidazolecarboxamide riboside (AICAR), when phosphorylated to AICAR monophosphate, can serve as an organic anion for antiporter activity. The polypeptide is Reduced folate transporter (Mus musculus (Mouse)).